The chain runs to 711 residues: MSSVQSQQEQLSQSDPSPSPNSCSSFELIDMDAGSLYEPVSPHWFYCKIIDSKETWIPFNSEDSQQLEEAYSSGKGCNGRVVPTDGGRYDVHLGERMRYAVYWDELASEVRRCTWFYKGDKDNKYVPYSESFSQVLEETYMLAVTLDEWKKKLESPNREIIILHNPKLMVHYQPVAGSDDWGSTPTEQGRPRTVKRGVENISVDIHCGEPLQIDHLVFVVHGIGPACDLRFRSIVQCVNDFRSVSLNLLQTHFKKAQENQQIGRVEFLPVNWHSPLHSTGVDVDLQRITLPSINRLRHFTNDTILDVFFYNSPTYCQTIVDTVASEMNRIYTLFLQRNPDFKGGVSIAGHSLGSLILFDILTNQKDSLGDIDSEKDSLNIVMDQGDTPTLEEDLKKLQLSEFFDIFEKEKVDKEALALCTDRDLQEIGIPLGPRKKILNYFSTRKNSMGIKRPAPQPASGANIPKESEFCSSSNTRNGDYLDVGIGQVSVKYPRLIYKPEIFFAFGSPIGMFLTVRGLKRIDPNYRFPTCKGFFNIYHPFDPVAYRIEPMVVPGVEFEPMLIPHHKGRKRMHLELREGLTRMSMDLKNNLLGSLRMAWKSFTRAPYPALQASETPEETEAEPESTSEKPSDVNTEETSVAVKEEVLPINVGMLNGGQRIDYVLQEKPIESFNEYLFALQSHLCYWESEDTVLLVLKEIYQTQGIFLDQPLQ.

Residues M1 to S24 form a disordered region. In terms of domain architecture, WWE spans D30–R112. The active-site Nucleophile is S351. Residues G385–M448 form the SAM domain. S447 bears the Phosphoserine mark. Disordered stretches follow at residues G449–C470 and L609–S638. The DDHD domain occupies L495–Q700. Residues T614–S624 are compositionally biased toward acidic residues.

The protein belongs to the PA-PLA1 family. In terms of assembly, forms homooligomers and, to a much smaller extent, heterooligomers with DDHD1. Widely expressed (at protein level).

The protein resides in the cytoplasm. Its subcellular location is the cytosol. The protein localises to the endoplasmic reticulum-Golgi intermediate compartment. It localises to the golgi apparatus. It is found in the cis-Golgi network. It carries out the reaction a triacylglycerol + H2O = a diacylglycerol + a fatty acid + H(+). The catalysed reaction is a diacylglycerol + H2O = a monoacylglycerol + a fatty acid + H(+). It catalyses the reaction a 1,3-diacylglycerol + H2O = a 1-acylglycerol + a fatty acid + H(+). The enzyme catalyses a 1-acylglycerol + H2O = glycerol + a fatty acid + H(+). It carries out the reaction 1,2,3-tri-(9Z-octadecenoyl)-glycerol + H2O = di-(9Z)-octadecenoylglycerol + (9Z)-octadecenoate + H(+). The catalysed reaction is di-(9Z)-octadecenoylglycerol + H2O = (9Z-octadecenoyl)-glycerol + (9Z)-octadecenoate + H(+). It catalyses the reaction 1,3-di-(9Z-octadecenoyl)-glycerol + H2O = 1-(9Z-octadecenoyl)-glycerol + (9Z)-octadecenoate + H(+). The enzyme catalyses trihexadecanoylglycerol + H2O = dihexadecanoylglycerol + hexadecanoate + H(+). It carries out the reaction 1,2-di-(9Z-octadecenoyl)-sn-glycero-3-phosphocholine + H2O = (9Z-octadecenoyl)-sn-glycero-3-phosphocholine + (9Z)-octadecenoate + H(+). The catalysed reaction is 1-(9Z-octadecenoyl)-glycerol + H2O = glycerol + (9Z)-octadecenoate + H(+). It catalyses the reaction 1,2-di-(9Z-octadecenoyl)-sn-glycero-3-phosphate + H2O = 2-(9Z-octadecenoyl)-sn-glycero-3-phosphate + (9Z)-octadecenoate + H(+). The enzyme catalyses 1-hexadecanoyl-2-(9Z-octadecenoyl)-sn-glycero-3-phosphate + H2O = 2-(9Z-octadecenoyl)-sn-glycero-3-phosphate + hexadecanoate + H(+). It carries out the reaction 1-hexadecanoyl-2-(9Z-octadecenoyl)-sn-glycero-3-phosphoethanolamine + H2O = 2-(9Z-octadecenoyl)-sn-glycero-3-phosphoethanolamine + hexadecanoate + H(+). The catalysed reaction is 1-hexadecanoyl-2-(9Z-octadecenoyl)-sn-glycero-3-phospho-L-serine + H2O = 2-(9Z-octadecenoyl)-sn-glycero-3-phospho-L-serine + hexadecanoate + H(+). It catalyses the reaction 1-hexadecanoyl-2-(9Z-octadecenoyl)-sn-glycero-3-phosphocholine + H2O = 2-(9Z-octadecenoyl)-sn-glycero-3-phosphocholine + hexadecanoate + H(+). Diacylglycerol (DAG) and triacylglycerol (TAG) lipase required for proper lipid homeostasis in the central nervous system. It cooperates with PNPLA2/ATGL in neuronal TAG catabolism and hydrolyzes sn-1,3 DAG downstream of PNPLA2/ATGL. In vitro, it also acts as a phospholipase that hydrolyzes preferentially phosphatidic acids, including 1,2-dioleoyl-sn-phosphatidic acid, phosphatidylcholine and phosphatidylethanolamine. Specifically binds to phosphatidylinositol 3-phosphate (PI(3)P), phosphatidylinositol 4-phosphate (PI(4)P), phosphatidylinositol 5-phosphate (PI(5)P) and possibly phosphatidylinositol 4,5-bisphosphate (PI(4,5)P2). May be involved in the maintenance of the endoplasmic reticulum and/or Golgi structures. May regulate the transport between Golgi apparatus and plasma membrane. This is Triacylglycerol hydrolase DDHD2 from Homo sapiens (Human).